The primary structure comprises 1061 residues: Isoleucine--tRNA ligase (1061 aa).

A 'HIGH' region motif is present at residues 50 to 60 (PYTSGSAHMGT). The 'KMSKS' region signature appears at 604–608 (KMSKS). K607 contributes to the ATP binding site.

This sequence belongs to the class-I aminoacyl-tRNA synthetase family. IleS type 2 subfamily. In terms of assembly, monomer. The cofactor is Zn(2+).

It localises to the cytoplasm. It catalyses the reaction tRNA(Ile) + L-isoleucine + ATP = L-isoleucyl-tRNA(Ile) + AMP + diphosphate. Catalyzes the attachment of isoleucine to tRNA(Ile). As IleRS can inadvertently accommodate and process structurally similar amino acids such as valine, to avoid such errors it has two additional distinct tRNA(Ile)-dependent editing activities. One activity is designated as 'pretransfer' editing and involves the hydrolysis of activated Val-AMP. The other activity is designated 'posttransfer' editing and involves deacylation of mischarged Val-tRNA(Ile). This chain is Isoleucine--tRNA ligase, found in Natronomonas pharaonis (strain ATCC 35678 / DSM 2160 / CIP 103997 / JCM 8858 / NBRC 14720 / NCIMB 2260 / Gabara) (Halobacterium pharaonis).